Reading from the N-terminus, the 544-residue chain is Putative lipase ATG15 (544 aa).

The Cytoplasmic portion of the chain corresponds to 1 to 45 (MVADFDSGWYEGAGDELGQGARNGVLRERLGGNEKAQVVRSRRKA). A helical; Signal-anchor for type II membrane protein transmembrane segment spans residues 46-66 (VAWNVLMVLGLILYVLYSACF). Over 67–544 (AQARQWWRTN…NWFGYCTEYA (478 aa)) the chain is Lumenal. Residues asparagine 200, asparagine 229, and asparagine 234 are each glycosylated (N-linked (GlcNAc...) asparagine). The active-site Charge relay system is the serine 362. The segment at 508-530 (PMPSSVASKPTPTPTSPGSPSST) is disordered.

The protein belongs to the AB hydrolase superfamily. Lipase family. Binds to both phosphatidylinositol (PI) and phosphatidylinositol 3,5-bisphosphate (PIP2).

The protein resides in the endosome. The protein localises to the multivesicular body membrane. It is found in the prevacuolar compartment membrane. It catalyses the reaction a triacylglycerol + H2O = a diacylglycerol + a fatty acid + H(+). Lipase which is essential for lysis of subvacuolar cytoplasm to vacuole targeted bodies and intravacuolar autophagic bodies. Involved in the lysis of intravacuolar multivesicular body (MVB) vesicles. The intravacuolar membrane disintegration by ATG15 is critical to life span extension. The sequence is that of Putative lipase ATG15 (ATG15) from Eremothecium gossypii (strain ATCC 10895 / CBS 109.51 / FGSC 9923 / NRRL Y-1056) (Yeast).